Here is an 896-residue protein sequence, read N- to C-terminus: DNA mismatch repair protein MutS (896 aa).

Position 638–645 (638–645 (GPNMSGKS)) interacts with ATP.

Belongs to the DNA mismatch repair MutS family.

This protein is involved in the repair of mismatches in DNA. It is possible that it carries out the mismatch recognition step. This protein has a weak ATPase activity. This is DNA mismatch repair protein MutS from Fusobacterium nucleatum subsp. nucleatum (strain ATCC 25586 / DSM 15643 / BCRC 10681 / CIP 101130 / JCM 8532 / KCTC 2640 / LMG 13131 / VPI 4355).